A 320-amino-acid chain; its full sequence is Ferrochelatase (320 aa).

The Fe cation site is built by histidine 194 and glutamate 275.

This sequence belongs to the ferrochelatase family. Monomer.

It localises to the cytoplasm. It catalyses the reaction heme b + 2 H(+) = protoporphyrin IX + Fe(2+). The protein operates within porphyrin-containing compound metabolism; protoheme biosynthesis; protoheme from protoporphyrin-IX: step 1/1. In terms of biological role, catalyzes the ferrous insertion into protoporphyrin IX. This is Ferrochelatase from Salmonella agona (strain SL483).